The following is a 253-amino-acid chain: Small ribosomal subunit protein uS2 (253 aa).

The protein belongs to the universal ribosomal protein uS2 family.

This Chlorobium luteolum (strain DSM 273 / BCRC 81028 / 2530) (Pelodictyon luteolum) protein is Small ribosomal subunit protein uS2.